A 273-amino-acid polypeptide reads, in one-letter code: MYSKVFSLISKYNLKPNSDLGQNFLIVGDVIKREVERAEIKNSETILEIGPGLGVLTDELAKRAGKVYAIEKDSRIIEILKKEYNWSNVEIMQGDALKIKFPEFNKVVSNLPYQISSPITFKLLKYDFERAVLIYQLEFAQRMVAKPGDKNYSRLSVMVQAKVNVDLVERIGRGAFYPKPKVDSAVIVMEPKPKDEQIELNENLVKALFQHRRKLASKALKDSYHMLGLTREDFKKFKPIIERVPHSNKRVFQLSIEDIKDIEEFLRNESLID.

Positions 23, 25, 50, 71, 95, and 110 each coordinate S-adenosyl-L-methionine.

The protein belongs to the class I-like SAM-binding methyltransferase superfamily. rRNA adenine N(6)-methyltransferase family. RsmA subfamily.

The protein localises to the cytoplasm. Its function is as follows. Specifically dimethylates two adjacent adenosines in the loop of a conserved hairpin near the 3'-end of 16S rRNA in the 30S particle. May play a critical role in biogenesis of 30S subunits. The chain is Probable ribosomal RNA small subunit methyltransferase A from Thermococcus sibiricus (strain DSM 12597 / MM 739).